Consider the following 337-residue polypeptide: Methionyl-tRNA formyltransferase (337 aa).

116–119 (SILP) is a binding site for (6S)-5,6,7,8-tetrahydrofolate.

The protein belongs to the Fmt family.

It carries out the reaction L-methionyl-tRNA(fMet) + (6R)-10-formyltetrahydrofolate = N-formyl-L-methionyl-tRNA(fMet) + (6S)-5,6,7,8-tetrahydrofolate + H(+). In terms of biological role, attaches a formyl group to the free amino group of methionyl-tRNA(fMet). The formyl group appears to play a dual role in the initiator identity of N-formylmethionyl-tRNA by promoting its recognition by IF2 and preventing the misappropriation of this tRNA by the elongation apparatus. The sequence is that of Methionyl-tRNA formyltransferase from Desulfovibrio desulfuricans (strain ATCC 27774 / DSM 6949 / MB).